The sequence spans 109 residues: Nucleoid-associated protein Asuc_0997 (109 aa).

The segment at 1-23 is disordered; that stretch reads MFGKGGLGGLMKQAQQMQERMQK.

The protein belongs to the YbaB/EbfC family. As to quaternary structure, homodimer.

It localises to the cytoplasm. It is found in the nucleoid. In terms of biological role, binds to DNA and alters its conformation. May be involved in regulation of gene expression, nucleoid organization and DNA protection. The chain is Nucleoid-associated protein Asuc_0997 from Actinobacillus succinogenes (strain ATCC 55618 / DSM 22257 / CCUG 43843 / 130Z).